A 134-amino-acid chain; its full sequence is Methylglyoxal synthase (134 aa).

Residues 1–134 (MHIALIAHDE…DWRDLRRNDE (134 aa)) enclose the MGS-like domain. Substrate contacts are provided by residues His-8, Lys-12, 34-37 (TGTT), and 54-55 (SG). Asp-60 (proton donor/acceptor) is an active-site residue. Substrate is bound at residue His-87.

The protein belongs to the methylglyoxal synthase family.

The catalysed reaction is dihydroxyacetone phosphate = methylglyoxal + phosphate. Catalyzes the formation of methylglyoxal from dihydroxyacetone phosphate. The chain is Methylglyoxal synthase from Listeria welshimeri serovar 6b (strain ATCC 35897 / DSM 20650 / CCUG 15529 / CIP 8149 / NCTC 11857 / SLCC 5334 / V8).